Here is a 354-residue protein sequence, read N- to C-terminus: Peptide chain release factor 1 (354 aa).

Glutamine 232 carries the post-translational modification N5-methylglutamine.

The protein belongs to the prokaryotic/mitochondrial release factor family. Methylated by PrmC. Methylation increases the termination efficiency of RF1.

It is found in the cytoplasm. In terms of biological role, peptide chain release factor 1 directs the termination of translation in response to the peptide chain termination codons UAG and UAA. The sequence is that of Peptide chain release factor 1 from Phytoplasma australiense.